A 430-amino-acid chain; its full sequence is Probable glucose-6-phosphate isomerase (430 aa).

Glu-271 (proton donor) is an active-site residue. Active-site residues include His-292, His-303, and Lys-403.

It belongs to the GPI family.

Its subcellular location is the cytoplasm. The enzyme catalyses alpha-D-glucose 6-phosphate = beta-D-fructose 6-phosphate. It functions in the pathway carbohydrate biosynthesis; gluconeogenesis. Its pathway is carbohydrate degradation; glycolysis; D-glyceraldehyde 3-phosphate and glycerone phosphate from D-glucose: step 2/4. Catalyzes the reversible isomerization of glucose-6-phosphate to fructose-6-phosphate. In Haloquadratum walsbyi (strain DSM 16790 / HBSQ001), this protein is Probable glucose-6-phosphate isomerase.